A 341-amino-acid chain; its full sequence is Retinol dehydrogenase 10-B (341 aa).

Residues 3 to 23 (IVLEFFLVTFRVLWAFVLAAA) traverse the membrane as a helical; Signal-anchor segment. Residue 40 to 64 (LITGAGSGLGRLFALEFARRRAQLV) participates in NADP(+) binding. Position 197 (Ser197) interacts with substrate. Tyr210 serves as the catalytic Proton acceptor.

This sequence belongs to the short-chain dehydrogenases/reductases (SDR) family.

The protein localises to the microsome membrane. It is found in the endoplasmic reticulum membrane. It carries out the reaction all-trans-retinol + NADP(+) = all-trans-retinal + NADPH + H(+). The protein operates within cofactor metabolism; retinol metabolism. Its function is as follows. Retinol dehydrogenase with a clear preference for NADP. Converts all-trans-retinol to all-trans-retinal. Has no detectable activity towards 11-cis-retinol, 9-cis-retinol and 13-cis-retinol. This chain is Retinol dehydrogenase 10-B (rdh10-b), found in Xenopus laevis (African clawed frog).